The sequence spans 159 residues: Phosphopantetheine adenylyltransferase (159 aa).

Residue threonine 10 participates in substrate binding. ATP contacts are provided by residues 10–11 (TF) and histidine 18. The substrate site is built by lysine 42, methionine 74, and arginine 88. Residues 89–91 (GLR), glutamate 99, and 124–130 (WSFISSS) each bind ATP.

Belongs to the bacterial CoaD family. As to quaternary structure, homohexamer. Mg(2+) serves as cofactor.

The protein resides in the cytoplasm. The enzyme catalyses (R)-4'-phosphopantetheine + ATP + H(+) = 3'-dephospho-CoA + diphosphate. It functions in the pathway cofactor biosynthesis; coenzyme A biosynthesis; CoA from (R)-pantothenate: step 4/5. Its function is as follows. Reversibly transfers an adenylyl group from ATP to 4'-phosphopantetheine, yielding dephospho-CoA (dPCoA) and pyrophosphate. The polypeptide is Phosphopantetheine adenylyltransferase (Salmonella arizonae (strain ATCC BAA-731 / CDC346-86 / RSK2980)).